The chain runs to 232 residues: Sugar fermentation stimulation protein homolog (232 aa).

This sequence belongs to the SfsA family.

The protein is Sugar fermentation stimulation protein homolog of Geobacter metallireducens (strain ATCC 53774 / DSM 7210 / GS-15).